Here is a 338-residue protein sequence, read N- to C-terminus: Histone acetyltransferase SAS2 (338 aa).

The segment covering 1–15 (MARSLSQSLTATTQK) has biased composition (polar residues). The disordered stretch occupies residues 1–31 (MARSLSQSLTATTQKLKGKKNGGKGKNKPSA). Over residues 16-31 (LKGKKNGGKGKNKPSA) the composition is skewed to basic residues. Residues 45-338 (LNERNIRQIQ…LKDEYLLIDD (294 aa)) form the MYST-type HAT domain. The C2HC MYST-type zinc-finger motif lies at 100–126 (LFVCEYCFKYTDDQTRFVGHVASCPFQ). Residue Lys168 is modified to N6-acetyllysine; by autocatalysis. Residues 209–211 (ILI) and 216–222 (QRRGLGL) contribute to the acetyl-CoA site. Catalysis depends on Glu242, which acts as the Proton donor/acceptor. Acetyl-CoA is bound by residues Ser246 and Lys323.

This sequence belongs to the MYST (SAS/MOZ) family. As to quaternary structure, interacts with CAC1. Component of the SAS complex, at least composed of SAS2, SAS4 and SAS5. These three proteins constitute the core of the complex and are sufficient to acetylate histones. SAS4 is essential for HAT activity of the complex, while SAS5 is required for maxiaml HAT activity. Autoacetylation at Lys-168 is required for proper function.

It is found in the cytoplasm. Its subcellular location is the nucleus. It carries out the reaction L-lysyl-[protein] + acetyl-CoA = N(6)-acetyl-L-lysyl-[protein] + CoA + H(+). Histone acetyltransferase (HAT) subunit of the SAS complex, a multiprotein complex that acetylates 'Lys-16' of histone H4 and 'Lys-14' of histone H3. The SAS complex is however unable to acetylate nucleosomal histones. The complex is involved in transcriptional silencing at telomeres and at HML locus. Also involved in rDNA silencing and G0 control. The polypeptide is Histone acetyltransferase SAS2 (SAS2) (Saccharomyces cerevisiae (strain ATCC 204508 / S288c) (Baker's yeast)).